Consider the following 233-residue polypeptide: 7-cyano-7-deazaguanine synthase (233 aa).

Residue 17–27 (LSGGLDSMVCA) participates in ATP binding. Positions 196, 206, 209, and 212 each coordinate Zn(2+).

Belongs to the QueC family. Zn(2+) is required as a cofactor.

It carries out the reaction 7-carboxy-7-deazaguanine + NH4(+) + ATP = 7-cyano-7-deazaguanine + ADP + phosphate + H2O + H(+). It participates in purine metabolism; 7-cyano-7-deazaguanine biosynthesis. Its function is as follows. Catalyzes the ATP-dependent conversion of 7-carboxy-7-deazaguanine (CDG) to 7-cyano-7-deazaguanine (preQ(0)). In Novosphingobium aromaticivorans (strain ATCC 700278 / DSM 12444 / CCUG 56034 / CIP 105152 / NBRC 16084 / F199), this protein is 7-cyano-7-deazaguanine synthase.